Here is a 407-residue protein sequence, read N- to C-terminus: MAAFDTIDDLPADSRVLVRLDLNSPIEDGKPQDNRRFERHAETVRELADAGHRVVLMAHQGRPGRDDFTSLSGHADILADHVGRDVAFVADTFGDEALDAIDALGAGEVLLLENTRMCDDELPEADPEEKAETEFVQTLAPQFDAYVNDAYSAAHRKHASLVGFPLVLPAYAGRVMETEYEANTAIATREFDGPVTMVVGGTKATDVIGVMDALDDRVDRFLLGGVAGELFLRAAGHPVGHDLEGTDLFDEQWEENRELIESVLDERGDAIRLATDLAYEGPDGDRAEVAVDDIDEKTDGYLDVGSETIAAYEPPIHESDAVFVKGALGVFEDERFADGTVGVLEAIAETDCFSVVGGGDTSRAIEMYGLDEDDFSHVSIAGGAYIRALTGEPLPAVEVLEAAAGRQ.

Substrate contacts are provided by residues 21 to 23 (DLN), Arg-36, 59 to 62 (HQGR), Arg-116, and Arg-156. ATP is bound by residues Glu-332 and 358–361 (GGDT).

The protein belongs to the phosphoglycerate kinase family. In terms of assembly, monomer.

It localises to the cytoplasm. It catalyses the reaction (2R)-3-phosphoglycerate + ATP = (2R)-3-phospho-glyceroyl phosphate + ADP. It functions in the pathway carbohydrate degradation; glycolysis; pyruvate from D-glyceraldehyde 3-phosphate: step 2/5. This is Phosphoglycerate kinase from Halorubrum lacusprofundi (strain ATCC 49239 / DSM 5036 / JCM 8891 / ACAM 34).